The following is a 338-amino-acid chain: Cytochrome P450 monooxygenase easK (338 aa).

A signal peptide spans 1–16; the sequence is MLLLTFTLPVVTLLLA. N-linked (GlcNAc...) asparagine glycosylation is found at Asn-240 and Asn-327.

Belongs to the cytochrome P450 family. Heme serves as cofactor.

It functions in the pathway alkaloid biosynthesis; ergot alkaloid biosynthesis. Functionally, cytochrome P450 monooxygenase; part of the gene cluster that mediates the biosynthesis of fumiclavanine C, a fungal ergot alkaloid. DmaW catalyzes the first step of ergot alkaloid biosynthesis by condensing dimethylallyl diphosphate (DMAP) and tryptophan to form 4-dimethylallyl-L-tryptophan. The second step is catalyzed by the methyltransferase easF that methylates 4-dimethylallyl-L-tryptophan in the presence of S-adenosyl-L-methionine, resulting in the formation of 4-dimethylallyl-L-abrine. The catalase easC and the FAD-dependent oxidoreductase easE then transform 4-dimethylallyl-L-abrine to chanoclavine-I which is further oxidized by EasD in the presence of NAD(+), resulting in the formation of chanoclavine-I aldehyde. EasA reduces chanoclavine-I aldehyde to dihydrochanoclavine-I aldehyde that spontaneously dehydrates to form 6,8-dimethyl-6,7-didehydroergoline. EasG then catalyzes the reduction of 6,8-dimethyl-6,7-didehydroergoline to form festuclavine. Hydrolysis of festuclavine by easM then leads to the formation of fumigaclavine B which is in turn acetylated by easN to fumigaclavine A. Finally, easL catalyzes the conversion of fumigaclavine A into fumigaclavine C by attaching a dimethylallyl moiety to C-2 of the indole nucleus. The role of the cytochrome P450 monooxygenase easK within the cluster has not been identified yet. The polypeptide is Cytochrome P450 monooxygenase easK (Aspergillus fumigatus (strain ATCC MYA-4609 / CBS 101355 / FGSC A1100 / Af293) (Neosartorya fumigata)).